Reading from the N-terminus, the 333-residue chain is Adenosine deaminase (333 aa).

Zn(2+) is bound by residues histidine 12 and histidine 14. Residues histidine 14, aspartate 16, and glycine 170 each coordinate substrate. Residue histidine 197 participates in Zn(2+) binding. Glutamate 200 (proton donor) is an active-site residue. Aspartate 278 is a Zn(2+) binding site. Aspartate 279 lines the substrate pocket.

The protein belongs to the metallo-dependent hydrolases superfamily. Adenosine and AMP deaminases family. Adenosine deaminase subfamily. The cofactor is Zn(2+).

It carries out the reaction adenosine + H2O + H(+) = inosine + NH4(+). It catalyses the reaction 2'-deoxyadenosine + H2O + H(+) = 2'-deoxyinosine + NH4(+). Catalyzes the hydrolytic deamination of adenosine and 2-deoxyadenosine. This chain is Adenosine deaminase, found in Shigella flexneri serotype 5b (strain 8401).